The chain runs to 98 residues: Integration host factor subunit alpha (98 aa).

The protein belongs to the bacterial histone-like protein family. As to quaternary structure, heterodimer of an alpha and a beta chain.

This protein is one of the two subunits of integration host factor, a specific DNA-binding protein that functions in genetic recombination as well as in transcriptional and translational control. This is Integration host factor subunit alpha from Actinobacillus pleuropneumoniae serotype 5b (strain L20).